The sequence spans 225 residues: MIPSAYPDAKEMARLTARMLLEIHAVHFNAKDPFTLSSGLPSPTYIDCRKLISFPRIRATLMDFLTVTVMRDVGFEAFDNIAGGETAGIPFAALVAERMALPMTYVRKKPKGYGRNARIEGAMGEGERVLLVEDLTTDGGSKLSFVDAIRETGATCGHTAVIFYYDIFPETTKTLGDHGVALHSLCTWWDVLAEAKQQGVFDEATLSEVEKFLHNPRKWQEANKK.

Residues arginine 107, lysine 108, lysine 111, and glutamate 133 to serine 141 each bind 5-phospho-alpha-D-ribose 1-diphosphate. Orotate is bound at residue threonine 137.

This sequence belongs to the purine/pyrimidine phosphoribosyltransferase family. PyrE subfamily. Homodimer. The cofactor is Mg(2+).

The enzyme catalyses orotidine 5'-phosphate + diphosphate = orotate + 5-phospho-alpha-D-ribose 1-diphosphate. The protein operates within pyrimidine metabolism; UMP biosynthesis via de novo pathway; UMP from orotate: step 1/2. Functionally, catalyzes the transfer of a ribosyl phosphate group from 5-phosphoribose 1-diphosphate to orotate, leading to the formation of orotidine monophosphate (OMP). This chain is Orotate phosphoribosyltransferase, found in Roseobacter denitrificans (strain ATCC 33942 / OCh 114) (Erythrobacter sp. (strain OCh 114)).